The following is a 110-amino-acid chain: Minor capsid protein VP2 (110 aa).

The protein belongs to the vesivirus VP2 protein family. As to quaternary structure, homooligomer. The portal-like structure consists in 12 copies of VP2. Interacts with capsid protein VP1.

The protein resides in the virion. Its subcellular location is the host cytoplasm. Functionally, minor structural protein that forms a portal-like structure at a unique three-fold axis of symmetry, following binding to the host receptor. The channel formed by VP2 may allow the delivery of the viral genome through the host endosomal membrane. The protein is Minor capsid protein VP2 of Vesicular exanthema of swine virus serotype A48 (isolate Swine/United States/A48/1948) (VESV).